Consider the following 150-residue polypeptide: Catabolic 3-dehydroquinase 2 (150 aa).

Tyr23 acts as the Proton acceptor in catalysis. Residues Asn74, His80, and Asp87 each coordinate substrate. The Proton donor role is filled by His100. Substrate-binding positions include 101–102 (IT) and Arg111.

This sequence belongs to the type-II 3-dehydroquinase family. In terms of assembly, homododecamer. Adopts a ring-like structure, composed of an arrangement of two hexameric rings stacked on top of one another.

The enzyme catalyses 3-dehydroquinate = 3-dehydroshikimate + H2O. Its pathway is aromatic compound metabolism; 3,4-dihydroxybenzoate biosynthesis; 3,4-dihydroxybenzoate from 3-dehydroquinate: step 1/2. Is involved in the catabolism of quinate. Allows the utilization of quinate as carbon source via the beta-ketoadipate pathway. This is Catabolic 3-dehydroquinase 2 from Aspergillus fumigatus (strain ATCC MYA-4609 / CBS 101355 / FGSC A1100 / Af293) (Neosartorya fumigata).